A 351-amino-acid chain; its full sequence is Dihydroorotate dehydrogenase (quinone) (351 aa).

FMN is bound by residues 61-65 (AGLDK) and threonine 85. Lysine 65 contributes to the substrate binding site. 110-114 (NRMGF) is a substrate binding site. FMN contacts are provided by asparagine 139 and asparagine 172. Asparagine 172 contacts substrate. The active-site Nucleophile is serine 175. Asparagine 177 is a substrate binding site. Positions 217 and 245 each coordinate FMN. 246–247 (NT) contacts substrate. FMN contacts are provided by residues glycine 268, glycine 297, and 318 to 319 (YS).

The protein belongs to the dihydroorotate dehydrogenase family. Type 2 subfamily. In terms of assembly, monomer. The cofactor is FMN.

The protein localises to the cell membrane. It catalyses the reaction (S)-dihydroorotate + a quinone = orotate + a quinol. It participates in pyrimidine metabolism; UMP biosynthesis via de novo pathway; orotate from (S)-dihydroorotate (quinone route): step 1/1. Catalyzes the conversion of dihydroorotate to orotate with quinone as electron acceptor. This chain is Dihydroorotate dehydrogenase (quinone), found in Xanthomonas euvesicatoria pv. vesicatoria (strain 85-10) (Xanthomonas campestris pv. vesicatoria).